Consider the following 499-residue polypeptide: Argininosuccinate lyase (499 aa).

A disordered region spans residues 1–22; it reads MSDGEDHETANADDRDETVVRR. Residues 7-22 are compositionally biased toward basic and acidic residues; sequence HETANADDRDETVVRR.

Belongs to the lyase 1 family. Argininosuccinate lyase subfamily.

It is found in the cytoplasm. The enzyme catalyses 2-(N(omega)-L-arginino)succinate = fumarate + L-arginine. Its pathway is amino-acid biosynthesis; L-arginine biosynthesis; L-arginine from L-ornithine and carbamoyl phosphate: step 3/3. This chain is Argininosuccinate lyase, found in Haloarcula marismortui (strain ATCC 43049 / DSM 3752 / JCM 8966 / VKM B-1809) (Halobacterium marismortui).